The following is a 295-amino-acid chain: Nucleotide-binding protein RD1_1380 (295 aa).

16–23 provides a ligand contact to ATP; that stretch reads GPSGAGRS. Residue 63–66 participates in GTP binding; that stretch reads DPRN.

This sequence belongs to the RapZ-like family.

Its function is as follows. Displays ATPase and GTPase activities. This Roseobacter denitrificans (strain ATCC 33942 / OCh 114) (Erythrobacter sp. (strain OCh 114)) protein is Nucleotide-binding protein RD1_1380.